The chain runs to 179 residues: uncharacterized protein (179 aa).

Its subcellular location is the plastid. It is found in the cyanelle. This is an uncharacterized protein from Cyanophora paradoxa.